We begin with the raw amino-acid sequence, 269 residues long: Putative hydro-lyase Atu3911 (269 aa).

Belongs to the D-glutamate cyclase family.

In Agrobacterium fabrum (strain C58 / ATCC 33970) (Agrobacterium tumefaciens (strain C58)), this protein is Putative hydro-lyase Atu3911.